The chain runs to 186 residues: Imidazoleglycerol-phosphate dehydratase (186 aa).

The protein belongs to the imidazoleglycerol-phosphate dehydratase family.

The protein localises to the cytoplasm. It catalyses the reaction D-erythro-1-(imidazol-4-yl)glycerol 3-phosphate = 3-(imidazol-4-yl)-2-oxopropyl phosphate + H2O. It functions in the pathway amino-acid biosynthesis; L-histidine biosynthesis; L-histidine from 5-phospho-alpha-D-ribose 1-diphosphate: step 6/9. The chain is Imidazoleglycerol-phosphate dehydratase from Pyrobaculum aerophilum (strain ATCC 51768 / DSM 7523 / JCM 9630 / CIP 104966 / NBRC 100827 / IM2).